A 1083-amino-acid chain; its full sequence is Centrosomal protein of 131 kDa (1083 aa).

Disordered regions lie at residues 1-155 (MKGT…AGPR) and 220-258 (GSESSGFGKLPKNVSSATHSARNNTGGSTGLPRRKEVTE). Residues 1 to 250 (MKGTRAIGSV…RNNTGGSTGL (250 aa)) are interaction with PLK4. 2 positions are modified to phosphoserine: Ser14 and Ser35. Ser47 bears the Phosphoserine; by MAPKAPK2 mark. The span at 68–87 (QAINNLRRSNSTTQVSQPRS) shows a compositional bias: polar residues. Phosphoserine; by MAPKAPK2 and PLK4 is present on Ser78. A phosphoserine mark is found at Ser89, Ser105, Ser114, Ser146, and Ser150. Over residues 138–148 (LPSNARSSSAL) the composition is skewed to polar residues. Positions 232–245 (NVSSATHSARNNTG) are enriched in polar residues. In terms of domain architecture, IQ spans 269-289 (NQATVTIQRWYRHQVQRRGAG). Residues 301 to 429 (REEQRQRSGE…PQQPPEDRTQ (129 aa)) are disordered. Composition is skewed to basic and acidic residues over residues 317–333 (HQQKEAARRKAREEKAR) and 360–369 (GPPENPRETR). The residue at position 381 (Ser381) is a Phosphoserine. The residue at position 383 (Thr383) is a Phosphothreonine. Ser453, Ser489, Asp496, Ser499, Ser731, and Ser798 each carry phosphoserine. The span at 1047–1076 (KEEAVSSLRTQHEAAVKRADHLEELLEQHR) shows a compositional bias: basic and acidic residues. A disordered region spans residues 1047-1083 (KEEAVSSLRTQHEAAVKRADHLEELLEQHRRPTPSTK).

It belongs to the CEP131 family. Self-associates. Associates with the centriolar satellite BBSome protein complex. Interacts with BBS4; the interaction limits BBS4 availability for association with the BBSome complex, and hence negatively regulates ciliary localization of the BBSome complex. Interacts with MIB1. Interacts with PCM1; the interaction increases in response to ultraviolet light (UV) radiation. Associates with microtubules; association with microtubules is reduced in response to cellular stress, such as UV stimulation, in a process that requires p38 MAP kinase signaling. Interacts with CEP290, DCTN1, PCNT, PCM1 and CEP152. Interacts with 14-3-3 proteins following UV-induced phosphorylation by MAPKAPK2; this inhibits formation of novel centriolar satellites. Interacts with SDCCAG8. Interacts with CCDC61. Interacts with PLK4. Ubiquitinated. Undergoes monoubiquitination catalyzed by the E3 ubiquitin-protein ligase MIB1 in proliferating cells, preventing cilia formation. Monoubiquitination by MIB1 is inhibited in response to cellular stress, such as ultraviolet light (UV) radiation or heat shock, resulting in cilia formation initiation. In terms of processing, MAPKAPK2-dependent phosphorylation at Ser-47 and Ser-78 occurs in response to cellular stress such as exposure to ultraviolet irradiation and promotes binding to 14-3-3 proteins which leads to cytoplasmic sequestration of CEP131 and blocks formation of new centriolar satellites. Phosphorylation at Ser-78 mediated by PLK4 is essential for proper organization and integrity of centriolar satellites but is dispensable for its localization to centrioles and its function in ciliogenesis.

The protein localises to the cytoplasm. The protein resides in the cytoskeleton. It is found in the microtubule organizing center. It localises to the centrosome. Its subcellular location is the centriolar satellite. The protein localises to the centriole. The protein resides in the cilium basal body. It is found in the cytoplasmic vesicle. It localises to the secretory vesicle. Its subcellular location is the acrosome. Functionally, component of centriolar satellites contributing to the building of a complex and dynamic network required to regulate cilia/flagellum formation. In proliferating cells, MIB1-mediated ubiquitination induces its sequestration within centriolar satellites, precluding untimely cilia formation initiation. In contrast, during normal and ultraviolet or heat shock cellular stress-induced ciliogenesis, its non-ubiquitinated form is rapidly displaced from centriolar satellites and recruited to centrosome/basal bodies in a microtubule- and p38 MAPK-dependent manner. Also acts as a negative regulator of BBSome ciliary trafficking. Plays a role in sperm flagellar formation; may be involved in the regulation of intraflagellar transport (IFT) and/or intramanchette (IMT) trafficking, which are important for axoneme extension and/or cargo delivery to the nascent sperm tail. Required for optimal cell proliferation and cell cycle progression; may play a role in the regulation of genome stability in non-ciliogenic cells. Involved in centriole duplication. Required for CEP152, WDR62 and CEP63 centrosomal localization and promotes the centrosomal localization of CDK2. Essential for maintaining proper centriolar satellite integrity. The sequence is that of Centrosomal protein of 131 kDa (CEP131) from Homo sapiens (Human).